A 186-amino-acid chain; its full sequence is UPF0398 protein LBUL_0921 (186 aa).

It belongs to the UPF0398 family.

This Lactobacillus delbrueckii subsp. bulgaricus (strain ATCC BAA-365 / Lb-18) protein is UPF0398 protein LBUL_0921.